A 751-amino-acid polypeptide reads, in one-letter code: MNINDITIPFQVDLSNCSKEPIHIPGLIQPHGVLLVLQEVDLTILQVSNNTFNILGRHPEQLLNQHLSCLLEAEQLSLLKDCLAQEDLQIINPLEFIIKSHNESISFDVIAHRSNNLLILELEANLSDKTHSFFRFYHLVKLAMLKLQGTATTTEISQILAQEVRKITGFDRVMVYRFDEQWNGKVIAEVKPEYLTSYLGLNYPASDIPQQARKLYSQNWLRLIPDAKYQPVPIVPINNPLNDQPLDLSRSVLRSVSPLHIEYMQNMGVTASMSISIMKNQKLWGLIACHHQSPKYIPYEIRSACEFLGQMTSVEMSAKEDSEDTEDKIQVKSVHSKLVQYMSAENDFINALIDHQPNILDLVKAQGAAVCFNGNSCTVGQVPPMPDIQVLVEWMSQNIHEEIFATDSLATVYPDAEKLRDVASGLIALSISRSQKNYILWFRPEVVRTVDWGGNPHKPVEVIANGEIRLSPRKSFDLWKETVLLKSQPWKSHEVNAALELRSAIIGIVLQKADELAQLNIELERSNQELDAFAYIASHDLKEPLRGIHNYSNFLMEDYGEIIDAPGKEKLLTLIRLTQRMEDLIDSLLHFSRLGRVDLSMQDTDLNEIVHRILDMLSGRIEETGVEIRILQLLPVVYCDRIQIGEVFSNLIANSIKYNDKANKWIEIGYIDNPPLPPTFYVRDNGIGIREKHFETIFRIFKRLHSPSKYGGGTGAGLTIAKKIVERHGGKIWVESTYGEGSTFYFTLQDV.

Residue C17 participates in a tetrapyrrole binding. The tract at residues 22–511 (IHIPGLIQPH…RSAIIGIVLQ (490 aa)) is chromophore binding domain. The GAF domain occupies 152–320 (TTTEISQILA…MTSVEMSAKE (169 aa)). The 216-residue stretch at 536-751 (IASHDLKEPL…STFYFTLQDV (216 aa)) folds into the Histidine kinase domain. H539 carries the post-translational modification Phosphohistidine; by autocatalysis.

The protein in the N-terminal section; belongs to the phytochrome family. In terms of processing, contains one covalently linked tetrapyrrole chromophore.

The enzyme catalyses ATP + protein L-histidine = ADP + protein N-phospho-L-histidine.. Functionally, photoreceptor which exists in two forms that are reversibly interconvertible by light: the R form that absorbs maximally in the red region of the spectrum and the FR form that absorbs maximally in the far-red region. This is Cyanobacterial phytochrome B (bphB) from Nostoc sp. (strain PCC 7120 / SAG 25.82 / UTEX 2576).